A 368-amino-acid polypeptide reads, in one-letter code: Aminomethyltransferase (368 aa).

The protein belongs to the GcvT family. The glycine cleavage system is composed of four proteins: P, T, L and H.

The enzyme catalyses N(6)-[(R)-S(8)-aminomethyldihydrolipoyl]-L-lysyl-[protein] + (6S)-5,6,7,8-tetrahydrofolate = N(6)-[(R)-dihydrolipoyl]-L-lysyl-[protein] + (6R)-5,10-methylene-5,6,7,8-tetrahydrofolate + NH4(+). In terms of biological role, the glycine cleavage system catalyzes the degradation of glycine. In Xylella fastidiosa (strain 9a5c), this protein is Aminomethyltransferase.